A 741-amino-acid polypeptide reads, in one-letter code: Cellulose 1,4-beta-cellobiosidase (reducing end) CelS (741 aa).

Positions 1 to 27 are cleaved as a signal peptide; that stretch reads MVKSRKISILLAVAMLVSIMIPTTAFA. Glu76 contacts substrate. Glu87 serves as the catalytic Proton donor. Residues Thr140, Asn204, Asp241, Gln247, and 251 to 252 each bind substrate; that span reads TN. The active-site Nucleophile is the Asp255. Substrate contacts are provided by residues 301 to 302, 326 to 327, Tyr421, Asp520, and 645 to 646; these read KY, WY, and WH. Residues 673–739 form the Dockerin domain; it reads STKLYGDVND…ILKEIDTLPY (67 aa). The Ca(2+) site is built by Asp679, Asn681, Asp683, Gly684, Lys685, Asp690, Asp711, Leu712, Asn713, Asp715, Arg717, and Asp722.

The protein belongs to the glycosyl hydrolase 48 (cellulase L) family.

Its subcellular location is the secreted. The enzyme catalyses Hydrolysis of (1-&gt;4)-beta-D-glucosidic linkages in cellulose and similar substrates, releasing cellobiose from the reducing ends of the chains.. Inhibited by cellobiose and lactose, but not by glucose. In terms of biological role, this enzyme catalyzes the exohydrolysis of 1,4-beta-glucosidic linkages in cellulose with a preference for amorphous or crystalline cellulose over carboxymethyl cellulose. The protein is Cellulose 1,4-beta-cellobiosidase (reducing end) CelS (celS) of Acetivibrio thermocellus (strain ATCC 27405 / DSM 1237 / JCM 9322 / NBRC 103400 / NCIMB 10682 / NRRL B-4536 / VPI 7372) (Clostridium thermocellum).